The chain runs to 761 residues: 5-methyltetrahydropteroyltriglutamate--homocysteine methyltransferase (761 aa).

5-methyltetrahydropteroyltri-L-glutamate contacts are provided by residues 16 to 19 (RELK) and lysine 116. Residues 435–437 (IGS) and glutamate 488 each bind L-homocysteine. Residues 435-437 (IGS) and glutamate 488 contribute to the L-methionine site. Residues 519–520 (RC) and tryptophan 565 each bind 5-methyltetrahydropteroyltri-L-glutamate. Position 603 (aspartate 603) interacts with L-homocysteine. Position 603 (aspartate 603) interacts with L-methionine. Glutamate 609 is a binding site for 5-methyltetrahydropteroyltri-L-glutamate. Zn(2+)-binding residues include histidine 645, cysteine 647, and glutamate 669. The active-site Proton donor is the histidine 698. A Zn(2+)-binding site is contributed by cysteine 730.

It belongs to the vitamin-B12 independent methionine synthase family. It depends on Zn(2+) as a cofactor.

It carries out the reaction 5-methyltetrahydropteroyltri-L-glutamate + L-homocysteine = tetrahydropteroyltri-L-glutamate + L-methionine. It participates in amino-acid biosynthesis; L-methionine biosynthesis via de novo pathway; L-methionine from L-homocysteine (MetE route): step 1/1. In terms of biological role, catalyzes the transfer of a methyl group from 5-methyltetrahydrofolate to homocysteine resulting in methionine formation. This Hahella chejuensis (strain KCTC 2396) protein is 5-methyltetrahydropteroyltriglutamate--homocysteine methyltransferase.